Here is a 144-residue protein sequence, read N- to C-terminus: Histone H2A.Z (144 aa).

Positions 1–18 are enriched in gly residues; sequence MPGGKGKSSGGKSSGGKT. A disordered region spans residues 1–36; that stretch reads MPGGKGKSSGGKSSGGKTSGTEGANKKQQSHSARAG. 2 positions are modified to N6-acetyllysine: lysine 5 and lysine 12.

It belongs to the histone H2A family. As to quaternary structure, the nucleosome is a histone octamer containing two molecules each of H2A, H2B, H3 and H4 assembled in one H3-H4 heterotetramer and two H2A-H2B heterodimers. The octamer wraps approximately 147 bp of DNA. H2A or its variant H2A.Z forms a heterodimer with H2B. H2A.Z associates with the VPS72/SWC2 subunit of the SWR1 chromatin remodeling complex. Also interacts with RBP1/DNA-directed RNA polymerase II largest subunit. Post-translationally, acetylated once deposited into chromatin.

The protein localises to the nucleus. Its subcellular location is the chromosome. In terms of biological role, variant histone H2A which can replace H2A in some nucleosomes. Nucleosomes wrap and compact DNA into chromatin, limiting DNA accessibility to the cellular machineries which require DNA as a template. Histones thereby play a central role in transcription regulation, DNA repair, DNA replication and chromosomal stability. DNA accessibility is regulated via a complex set of post-translational modifications of histones, also called histone code, and nucleosome remodeling. This variant is enriched at promoters, it may keep them in a repressed state until the appropriate activation signal is received. Near telomeres, it may counteract gene silencing caused by the spread of heterochromatin proteins. Required for the RNA polymerase II and SPT15/TBP recruitment to the target genes. Involved in chromosome stability. The protein is Histone H2A.Z (HTZ1) of Gibberella zeae (strain ATCC MYA-4620 / CBS 123657 / FGSC 9075 / NRRL 31084 / PH-1) (Wheat head blight fungus).